Here is a 316-residue protein sequence, read N- to C-terminus: Ribosomal protein L11 methyltransferase (316 aa).

Threonine 157, glycine 178, aspartate 200, and asparagine 243 together coordinate S-adenosyl-L-methionine.

It belongs to the methyltransferase superfamily. PrmA family.

It is found in the cytoplasm. The enzyme catalyses L-lysyl-[protein] + 3 S-adenosyl-L-methionine = N(6),N(6),N(6)-trimethyl-L-lysyl-[protein] + 3 S-adenosyl-L-homocysteine + 3 H(+). Methylates ribosomal protein L11. The sequence is that of Ribosomal protein L11 methyltransferase from Streptococcus pneumoniae (strain JJA).